Consider the following 455-residue polypeptide: Ribulose bisphosphate carboxylase large chain (455 aa).

K5 is modified (N6,N6,N6-trimethyllysine). Substrate-binding residues include N114 and T164. Catalysis depends on K166, which acts as the Proton acceptor. Residue K168 participates in substrate binding. K192, D194, and E195 together coordinate Mg(2+). Position 192 is an N6-carboxylysine (K192). H285 (proton acceptor) is an active-site residue. Substrate-binding residues include R286, H318, and S370.

Belongs to the RuBisCO large chain family. Type I subfamily. In terms of assembly, heterohexadecamer of 8 large chains and 8 small chains; disulfide-linked. The disulfide link is formed within the large subunit homodimers. It depends on Mg(2+) as a cofactor. The disulfide bond which can form in the large chain dimeric partners within the hexadecamer appears to be associated with oxidative stress and protein turnover.

It is found in the plastid. The protein localises to the chloroplast. It carries out the reaction 2 (2R)-3-phosphoglycerate + 2 H(+) = D-ribulose 1,5-bisphosphate + CO2 + H2O. It catalyses the reaction D-ribulose 1,5-bisphosphate + O2 = 2-phosphoglycolate + (2R)-3-phosphoglycerate + 2 H(+). RuBisCO catalyzes two reactions: the carboxylation of D-ribulose 1,5-bisphosphate, the primary event in carbon dioxide fixation, as well as the oxidative fragmentation of the pentose substrate in the photorespiration process. Both reactions occur simultaneously and in competition at the same active site. The sequence is that of Ribulose bisphosphate carboxylase large chain from Brownea coccinea (Rose of Venezuela).